The following is a 503-amino-acid chain: Maturase K (503 aa).

The protein belongs to the intron maturase 2 family. MatK subfamily.

It localises to the plastid. The protein resides in the chloroplast. In terms of biological role, usually encoded in the trnK tRNA gene intron. Probably assists in splicing its own and other chloroplast group II introns. The sequence is that of Maturase K from Rosa canina (Dog rose).